The primary structure comprises 735 residues: 5-methyltetrahydropteroyltriglutamate--homocysteine methyltransferase (735 aa).

5-methyltetrahydropteroyltri-L-glutamate contacts are provided by residues 15-18 (REFK) and K104. Residues 409–411 (IGS) and E462 contribute to the L-homocysteine site. Residues 409–411 (IGS) and E462 contribute to the L-methionine site. 5-methyltetrahydropteroyltri-L-glutamate is bound by residues 493 to 494 (RC) and W539. D577 is a binding site for L-homocysteine. Position 577 (D577) interacts with L-methionine. Position 583 (E583) interacts with 5-methyltetrahydropteroyltri-L-glutamate. Residues H618, C620, and E642 each contribute to the Zn(2+) site. H672 acts as the Proton donor in catalysis. C704 lines the Zn(2+) pocket.

The protein belongs to the vitamin-B12 independent methionine synthase family. Zn(2+) is required as a cofactor.

The enzyme catalyses 5-methyltetrahydropteroyltri-L-glutamate + L-homocysteine = tetrahydropteroyltri-L-glutamate + L-methionine. It participates in amino-acid biosynthesis; L-methionine biosynthesis via de novo pathway; L-methionine from L-homocysteine (MetE route): step 1/1. Functionally, catalyzes the transfer of a methyl group from 5-methyltetrahydrofolate to homocysteine resulting in methionine formation. The polypeptide is 5-methyltetrahydropteroyltriglutamate--homocysteine methyltransferase (Thermotoga petrophila (strain ATCC BAA-488 / DSM 13995 / JCM 10881 / RKU-1)).